Reading from the N-terminus, the 318-residue chain is Protein W (318 aa).

2 disordered regions span residues 1-23 and 54-318; these read MDQD…GGRE and INTL…KKGA. 4 stretches are compositionally biased toward basic and acidic residues: residues 7–20, 99–110, 150–168, and 175–193; these read ISKE…EASG, AEAHARNVDKQN, GAED…RGED, and EEIR…RADN. Phosphoserine; by host occurs at positions 249, 257, and 260.

The chain is Protein W (P/V/C) from Sendai virus (strain Ohita) (SeV).